A 175-amino-acid polypeptide reads, in one-letter code: Lithostathine (175 aa).

The N-terminal stretch at 1–26 (MLPSLGLPRLSWMLLSCLMLLSQIQG) is a signal peptide. The propeptide occupies 27–37 (ENSQKELPSAR). Residues 38-173 (ISCPSGSMAY…NLNLPYVCKF (136 aa)) form the C-type lectin domain. 3 disulfide bridges follow: C40–C51, C68–C171, and C146–C163.

As to quaternary structure, cleaved to give an A chain and a B chain joined by a disulfide bond. In pancreatic acinar cells.

Its subcellular location is the secreted. Functionally, might act as an inhibitor of spontaneous calcium carbonate precipitation. The polypeptide is Lithostathine (PTP) (Bos taurus (Bovine)).